Reading from the N-terminus, the 58-residue chain is Large ribosomal subunit protein bL32 (58 aa).

Belongs to the bacterial ribosomal protein bL32 family.

The polypeptide is Large ribosomal subunit protein bL32 (Anaplasma phagocytophilum (strain HZ)).